Here is a 329-residue protein sequence, read N- to C-terminus: Malate dehydrogenase (329 aa).

An NAD(+)-binding site is contributed by 12-18 (GAAGQIG). Residues Arg-95 and Arg-101 each coordinate substrate. Residues Asn-108, Gln-115, and 132–134 (VGN) each bind NAD(+). The substrate site is built by Asn-134 and Arg-165. Residue His-190 is the Proton acceptor of the active site.

Belongs to the LDH/MDH superfamily. MDH type 2 family.

The catalysed reaction is (S)-malate + NAD(+) = oxaloacetate + NADH + H(+). Its function is as follows. Catalyzes the reversible oxidation of malate to oxaloacetate. This is Malate dehydrogenase from Polynucleobacter asymbioticus (strain DSM 18221 / CIP 109841 / QLW-P1DMWA-1) (Polynucleobacter necessarius subsp. asymbioticus).